A 934-amino-acid chain; its full sequence is Rab GTPase-activating protein tbc-11 (934 aa).

The PID domain occupies 16 to 134 (VQYLGCSQLV…SKAETAAKAL (119 aa)). The segment at 337–383 (FISLESDSDRKRSKQNLGKSPSRMPTQLLHPTGDDESDCDEPLLSGS) is disordered. Positions 351–361 (QNLGKSPSRMP) are enriched in polar residues. The 191-residue stretch at 422–612 (GIPDKLRGRV…FILDLFLSQG (191 aa)) folds into the Rab-GAP TBC domain. 2 coiled-coil regions span residues 727–800 (KIEL…YKKL) and 861–895 (LEEREDHIKNLEIDLAQTKLSLVEAECRNQDLTHQ).

Rab GTPase activating protein for the small GTPases rab-6.1 and rab-6.2. Probably acts through rab-6.1 and rab-6.2 to play a role in microRNA-mediated gene silencing in different tissue types. Required for seam cell division and alae formation. The chain is Rab GTPase-activating protein tbc-11 from Caenorhabditis elegans.